The sequence spans 194 residues: Anthranilate synthase component 2 (194 aa).

Positions 2 to 194 (KIFFIDNFDS…QSVGFLRELS (193 aa)) constitute a Glutamine amidotransferase type-1 domain. Position 57-59 (57-59 (GPG)) interacts with L-glutamine. The active-site Nucleophile; for GATase activity is the C84. L-glutamine-binding positions include Q88 and 134–135 (SL). Catalysis depends on for GATase activity residues H170 and E172.

As to quaternary structure, heterotetramer consisting of two non-identical subunits: a beta subunit (TrpG) and a large alpha subunit (TrpE).

The enzyme catalyses chorismate + L-glutamine = anthranilate + pyruvate + L-glutamate + H(+). It participates in amino-acid biosynthesis; L-tryptophan biosynthesis; L-tryptophan from chorismate: step 1/5. Part of a heterotetrameric complex that catalyzes the two-step biosynthesis of anthranilate, an intermediate in the biosynthesis of L-tryptophan. In the first step, the glutamine-binding beta subunit (TrpG) of anthranilate synthase (AS) provides the glutamine amidotransferase activity which generates ammonia as a substrate that, along with chorismate, is used in the second step, catalyzed by the large alpha subunit of AS (TrpE) to produce anthranilate. In the absence of TrpG, TrpE can synthesize anthranilate directly from chorismate and high concentrations of ammonia. This chain is Anthranilate synthase component 2 (trpG), found in Helicobacter pylori (strain J99 / ATCC 700824) (Campylobacter pylori J99).